Here is a 53-residue protein sequence, read N- to C-terminus: FHVPDDRPCINPGRCPLVPDATCTFVCKAADNDFGYECQHVWTFEGQRVGCYA.

3 disulfide bridges follow: Cys-9/Cys-23, Cys-15/Cys-51, and Cys-27/Cys-38. A Zn(2+)-binding site is contributed by Ala-53.

Monomer. Interacts (via C-terminus) with human CPA4.

Its function is as follows. Metallocarboxypeptidase inhibitor. Has an inhibitory effect on bovine CPA1 and CPB2, human CPA1, CPA2, CPA4, CPB1 and CPB2, and porcine CPB1. Does not inhibit D.melanogaster svr (carboxypeptidase D). Shows no activity against serine proteases subtilisin or bovine trypsin, cysteine protease papain, and aspartyl protease porcine pepsin. This Nerita versicolor (Four-tooth nerite) protein is Metallocarboxypeptidase inhibitor.